The sequence spans 244 residues: MATWKFIIRSVLFFLDLAMLLAALALIAVGFWMGYDSSFDTDLKNVIYKYDDPKSLADAKFNIRVWLIVVFWSIIGLSLGAVVTAVLGMISSVWPKRKGFMITYLVLIIVLVSLEIGCGVAVLVRRNSLHDNTNSLIDAMYTTNSVNDLKIIQDKYNCCGIENSLFNVMYCGPMSQKPHCDVAVFDSVDNTMMISGIILLVILILQTIAIILPVPILISRKKTYKYSYEPRVTQLADITEDTRF.

Helical transmembrane passes span 11–31, 67–87, 104–124, and 198–218; these read VLFFLDLAMLLAALALIAVGF, LIVVFWSIIGLSLGAVVTAVL, YLVLIIVLVSLEIGCGVAVLV, and ILLVILILQTIAIILPVPILI.

Belongs to the tetraspanin (TM4SF) family.

The protein resides in the membrane. In Caenorhabditis elegans, this protein is Tetraspanin-1 (tsp-1).